A 118-amino-acid chain; its full sequence is Large ribosomal subunit protein uL18 (118 aa).

Belongs to the universal ribosomal protein uL18 family. Part of the 50S ribosomal subunit; part of the 5S rRNA/L5/L18/L25 subcomplex. Contacts the 5S and 23S rRNAs.

Functionally, this is one of the proteins that bind and probably mediate the attachment of the 5S RNA into the large ribosomal subunit, where it forms part of the central protuberance. In Levilactobacillus brevis (strain ATCC 367 / BCRC 12310 / CIP 105137 / JCM 1170 / LMG 11437 / NCIMB 947 / NCTC 947) (Lactobacillus brevis), this protein is Large ribosomal subunit protein uL18.